A 463-amino-acid chain; its full sequence is MKELTCFKAYDIRGQLGSELDNEIAYRIGRSYGQFLKSENDADKTVVVGGDVRLTSEALKQALANGLMDAGINVIDIGVTGTEEIYFATFYLGVDGGIEVTASHNPMDYNGMKLVREGSKPISGDTGLREIQALAEKNEFMDVEVKGNYKKVSLLPEYVDHLISYITPAKIKPMKLVINSGNGAAGHVIDELEKRFIELSIPLEIIKVHHEEDGNFPNGIPNPLLPECRADTANAVKEHKADMGIAFDGDFDRCFLFDENGDFIEGYYIVGLLAEAFLQKEQGAKIIHDPRLSWNTIDVVTKSGGVPVMSKTGHAFIKERMRKEDAIYGGEMSAHHYFRDFGYCDSGMIPWLLITELLSLAPDISLSKLISAKRFLFPCSGEINFKVKQAKLIMEQVYLHYYENSIHFSAIDGISLEFEGWRFNLRDSNTEPLLRLNVESKQNIALMNDKVEELTKLIKKLDI.

Serine 103 (phosphoserine intermediate) is an active-site residue. Residues serine 103, aspartate 248, aspartate 250, and aspartate 252 each contribute to the Mg(2+) site.

It belongs to the phosphohexose mutase family. Mg(2+) serves as cofactor.

The protein localises to the cell membrane. It catalyses the reaction alpha-D-mannose 1-phosphate = D-mannose 6-phosphate. The protein operates within nucleotide-sugar biosynthesis; GDP-alpha-D-mannose biosynthesis; alpha-D-mannose 1-phosphate from D-fructose 6-phosphate: step 2/2. Its pathway is bacterial outer membrane biogenesis; LPS O-antigen biosynthesis. In terms of biological role, involved in GDP-mannose biosynthesis which serves as the activated sugar nucleotide precursor for mannose residues in cell surface polysaccharides. The chain is Phosphomannomutase (rfbB) from Vibrio cholerae serotype O1 (strain ATCC 39315 / El Tor Inaba N16961).